A 372-amino-acid chain; its full sequence is 4-hydroxy-3-methylbut-2-en-1-yl diphosphate synthase (flavodoxin) (372 aa).

Residues C270, C273, C305, and E312 each contribute to the [4Fe-4S] cluster site.

The protein belongs to the IspG family. Requires [4Fe-4S] cluster as cofactor.

The catalysed reaction is (2E)-4-hydroxy-3-methylbut-2-enyl diphosphate + oxidized [flavodoxin] + H2O + 2 H(+) = 2-C-methyl-D-erythritol 2,4-cyclic diphosphate + reduced [flavodoxin]. The protein operates within isoprenoid biosynthesis; isopentenyl diphosphate biosynthesis via DXP pathway; isopentenyl diphosphate from 1-deoxy-D-xylulose 5-phosphate: step 5/6. Its function is as follows. Converts 2C-methyl-D-erythritol 2,4-cyclodiphosphate (ME-2,4cPP) into 1-hydroxy-2-methyl-2-(E)-butenyl 4-diphosphate. The chain is 4-hydroxy-3-methylbut-2-en-1-yl diphosphate synthase (flavodoxin) from Escherichia coli (strain SMS-3-5 / SECEC).